The following is a 339-amino-acid chain: Heat-inducible transcription repressor HrcA (339 aa).

Belongs to the HrcA family.

Negative regulator of class I heat shock genes (grpE-dnaK-dnaJ and groELS operons). Prevents heat-shock induction of these operons. This is Heat-inducible transcription repressor HrcA from Parafrankia sp. (strain EAN1pec).